The primary structure comprises 137 residues: Nucleoside diphosphate kinase (137 aa).

ATP is bound by residues Lys-9, Phe-57, Arg-85, Thr-91, Arg-102, and Asn-112. Catalysis depends on His-115, which acts as the Pros-phosphohistidine intermediate.

This sequence belongs to the NDK family. As to quaternary structure, homotetramer. Mg(2+) serves as cofactor.

The protein resides in the cytoplasm. The catalysed reaction is a 2'-deoxyribonucleoside 5'-diphosphate + ATP = a 2'-deoxyribonucleoside 5'-triphosphate + ADP. It catalyses the reaction a ribonucleoside 5'-diphosphate + ATP = a ribonucleoside 5'-triphosphate + ADP. Functionally, major role in the synthesis of nucleoside triphosphates other than ATP. The ATP gamma phosphate is transferred to the NDP beta phosphate via a ping-pong mechanism, using a phosphorylated active-site intermediate. The chain is Nucleoside diphosphate kinase from Campylobacter fetus subsp. fetus (strain 82-40).